Reading from the N-terminus, the 437-residue chain is Sodium/bile acid cotransporter 4 (437 aa).

Residues 1-103 (MDGLDNTTRL…PPFWDTPLNH (103 aa)) lie on the Extracellular side of the membrane. Asn-6, Asn-20, and Asn-26 each carry an N-linked (GlcNAc...) asparagine glycan. The segment at 16–84 (LLPDNLTLSP…GGVAGQDSST (69 aa)) is disordered. The segment covering 21 to 50 (LTLSPNASSTSASTLSPLPVTSSPSPGLSL) has biased composition (low complexity). A helical membrane pass occupies residues 104-124 (GLNVFVGAALCITMLGLGCTV). The Cytoplasmic portion of the chain corresponds to 125–140 (DVNHFGAHVRRPVGAL). Residues 141 to 161 (LAALCQFGFLPLLAFLLALAF) form a helical membrane-spanning segment. Topologically, residues 162–197 (KLDEVAAVAVLLCGCCPGGNLSNLMSLLVDGDMNLS) are extracellular. Residues Asn-181 and Asn-195 are each glycosylated (N-linked (GlcNAc...) asparagine). A helical membrane pass occupies residues 198-218 (IIMTISSTLLALVLMPLCLWI). Residues 219-233 (YSRAWINTPLVQLLP) are Cytoplasmic-facing. Residues 234–254 (LGAVTLTLCSTLIPIGLGVFI) traverse the membrane as a helical segment. At 255–267 (RYKYNRVADYIVK) the chain is on the extracellular side. The helical transmembrane segment at 268–288 (VSLCSLLVTLVVLFIMTGTML) threads the bilayer. Over 289–291 (GPE) the chain is Cytoplasmic. A helical transmembrane segment spans residues 292-312 (LLASIPAAVYVVAIFMPLAGY). Residues 313-360 (ASGYGLATLFHLPPNCKRTVCLETGSQNVQLCTAILKLAFPPRFIGSM) lie on the Extracellular side of the membrane. A helical membrane pass occupies residues 361–381 (YMFPLLYALFQSAEAGVFVLI). At 382-437 (YKMYGSEILHKREALDEDDDTDISYKKLKEEELADTSYGTVGTDDLVLMETTQTSL) the chain is on the cytoplasmic side.

The protein belongs to the bile acid:sodium symporter (BASS) (TC 2.A.28) family. Activated following N-terminal proteolytic cleavage by thrombin and/or proteases. In terms of tissue distribution, mainly expressed in the central nervous system cholinergic neurons. Expressed (at protein level) in motor regions of the spinal cord and rhombencephalon, in mesopontine cholinergic neurons, the medial habenula, cholinergic areas of the forebrain, and the gut myenteric plexus.

It localises to the cell membrane. Functionally, transporter for bile acids. This Rattus norvegicus (Rat) protein is Sodium/bile acid cotransporter 4 (Slc10a4).